The following is a 229-amino-acid chain: Histone H3-like centromeric protein CSE4 (229 aa).

Residues 1 to 35 (MSSKQQWVSSAIQSDSSGRSLSNVNRLAGDQQSIN) show a composition bias toward polar residues. Residues 1–78 (MSSKQQWVSS…DIETDYEDQA (78 aa)) are disordered. The segment covering 53 to 68 (PRREERRRYESSKSDL) has biased composition (basic and acidic residues). Residues 115–132 (KRREKQRKQSLKRVEKKY) carry the Nuclear localization signal motif. The tract at residues 132 to 229 (YTPSELALYE…LARRIRGQFI (98 aa)) is H3-like.

Belongs to the histone H3 family. In terms of assembly, component of centromeric nucleosomes, where DNA is wrapped around a histone octamer core. The octamer contains two molecules each of H2A, H2B, CSE4/CENPA and H4 assembled in one CSE4-H4 heterotetramer and two H2A-H2B heterodimers. Interacts with the inner kinetochore. Interacts with the central kinetochore protein CTF19. Interacts with YTA7. Ubiquitinated. Is degraded through ubiquitin-mediated proteolysis when not protected by its association to the kinetochore.

The protein localises to the nucleus. It is found in the chromosome. It localises to the centromere. Functionally, histone H3-like nucleosomal protein that is specifically found in centromeric nucleosomes. Replaces conventional H3 in the nucleosome core of centromeric chromatin that serves as an assembly site for the inner kinetochore. Required for recruitment and assembly of kinetochore proteins, mitotic progression and chromosome segregation. May serve as an epigenetic mark that propagates centromere identity through replication and cell division. Required for functional chromatin architecture at the yeast 2-micron circle partitioning locus and promotes equal plasmid segregation. This is Histone H3-like centromeric protein CSE4 (CSE4) from Saccharomyces cerevisiae (strain ATCC 204508 / S288c) (Baker's yeast).